The sequence spans 472 residues: MNFSLLTTEMLTALLGIGLLAIGLLNRKKDSHRGVAYAAVFGLLGILVVTFFQYGINTNTFHQLWILDDYSVFMKEIFLVAAILVILSAIDYVDGLPRFKTEFYALLVFATLGMMVMASANDLVTLYVGMELMTITFFILVAYILGDGRSSEAGVKYLLLGGASSAVLLYGLSLLYGLTGTTVIPDLLARLTWSPALAIAVVTIIAGFGFKISAVPFHMWSPDIYEGAPTPVTGFLAAASKAAGFAVLVRLFLEGMPLQGGADWLTVIAVLAGVTMVIGNVVAIPQTNIKRMLAYSSVAQAGYLLVGLMSTDAPGVKGILFYAMLYVVANMGAFAVATAVGRAIGSDEIADYAGLSQRQPLLASVMTISLLSLAGIPPLAGFVGKLYLFSAIMDKGVLWPAFLGFVMSMVSVYYYLNVSLYMWRDDPKDDRPIPVSGPMKLTVIFSMVVTVILGIYPGPLAEVATVAAKSLF.

The next 14 helical transmembrane spans lie at leucine 5–leucine 25, alanine 36–isoleucine 56, isoleucine 77–proline 97, phenylalanine 103–leucine 123, leucine 126–glycine 146, leucine 158–leucine 178, leucine 197–phenylalanine 217, proline 229–valine 249, tryptophan 264–isoleucine 284, methionine 292–methionine 309, isoleucine 319–alanine 339, alanine 363–valine 383, glycine 396–leucine 416, and leucine 441–alanine 461.

Belongs to the complex I subunit 2 family. As to quaternary structure, NDH-1 is composed of 14 different subunits. Subunits NuoA, H, J, K, L, M, N constitute the membrane sector of the complex.

Its subcellular location is the cell membrane. The catalysed reaction is a quinone + NADH + 5 H(+)(in) = a quinol + NAD(+) + 4 H(+)(out). Functionally, NDH-1 shuttles electrons from NADH, via FMN and iron-sulfur (Fe-S) centers, to quinones in the respiratory chain. The immediate electron acceptor for the enzyme in this species is believed to be a menaquinone. Couples the redox reaction to proton translocation (for every two electrons transferred, four hydrogen ions are translocated across the cytoplasmic membrane), and thus conserves the redox energy in a proton gradient. The polypeptide is NADH-quinone oxidoreductase subunit N (Heliobacterium modesticaldum (strain ATCC 51547 / Ice1)).